The chain runs to 74 residues: Large ribosomal subunit protein bL31 (74 aa).

The Zn(2+) site is built by C16, C18, C38, and C41.

It belongs to the bacterial ribosomal protein bL31 family. Type A subfamily. As to quaternary structure, part of the 50S ribosomal subunit. Zn(2+) is required as a cofactor.

In terms of biological role, binds the 23S rRNA. The sequence is that of Large ribosomal subunit protein bL31 from Salinispora tropica (strain ATCC BAA-916 / DSM 44818 / JCM 13857 / NBRC 105044 / CNB-440).